A 626-amino-acid chain; its full sequence is Extracellular metalloproteinase 1 (626 aa).

Positions 1–17 are cleaved as a signal peptide; sequence MLSSLLAGAGLVALAAS. The propeptide occupies 18-241; that stretch reads HPTSHGNALT…IHGVVDYSAD (224 aa). N315 carries N-linked (GlcNAc...) asparagine glycosylation. A Zn(2+)-binding site is contributed by H425. The active site involves E426. Zn(2+) is bound at residue H429. The interval 606–626 is disordered; it reads GSGARYSSTARTGSTALPSGC. Positions 610-626 are enriched in polar residues; that stretch reads RYSSTARTGSTALPSGC.

This sequence belongs to the peptidase M36 family. It depends on Zn(2+) as a cofactor.

It localises to the secreted. In terms of biological role, secreted metalloproteinase that allows assimilation of proteinaceous substrates. This is Extracellular metalloproteinase 1 (MEP1) from Phaeosphaeria nodorum (strain SN15 / ATCC MYA-4574 / FGSC 10173) (Glume blotch fungus).